The chain runs to 331 residues: Putative heat stress transcription factor A-6a (331 aa).

Residues 135–160 form a disordered region; the sequence is RRGAGTGSTTPRAVNCGGGGGEGEVE. Positions 156 to 238 form a coiled coil; it reads EGEVERLRRD…VERKKRRMLA (83 aa). The segment at 162 to 212 is hydrophobic repeat HR-A/B; the sequence is LRRDKEALARELARLRRQQQEARAQLLDMERRVRGTERRQEQCTEFLARAL. The Nuclear localization signal motif lies at 230–235; the sequence is ERKKRR. The Nuclear export signal signature appears at 246 to 253; the sequence is LTFEALAL. Residues 270–279 carry the AHA1 motif; sequence DMIWYELLGE. Positions 305-313 match the AHA2 motif; that stretch reads AEPWEEMGE.

It belongs to the HSF family. Class A subfamily. In terms of assembly, homotrimer. In terms of processing, exhibits temperature-dependent phosphorylation.

The protein localises to the cytoplasm. Its subcellular location is the nucleus. Functionally, transcriptional regulator that specifically binds DNA of heat shock promoter elements (HSE). The polypeptide is Putative heat stress transcription factor A-6a (HSFA6A) (Oryza sativa subsp. japonica (Rice)).